Here is a 328-residue protein sequence, read N- to C-terminus: G2/mitotic-specific cyclin-2 (328 aa).

It belongs to the cyclin family. Cyclin AB subfamily. Interacts with the CDC2 protein kinase to form a serine/threonine kinase holoenzyme complex also known as maturation promoting factor (MPF). The cyclin subunit imparts substrate specificity to the complex. Only expressed in organs with dividing cells.

Essential for the control of the cell cycle at the G2/M (mitosis) transition. The polypeptide is G2/mitotic-specific cyclin-2 (Medicago sativa (Alfalfa)).